Reading from the N-terminus, the 249-residue chain is Ditrans,polycis-undecaprenyl-diphosphate synthase ((2E,6E)-farnesyl-diphosphate specific) (249 aa).

The active site involves aspartate 29. Aspartate 29 contributes to the Mg(2+) binding site. Substrate-binding positions include 30 to 33 (GNGR), tryptophan 34, arginine 42, histidine 46, and 74 to 76 (STE). Residue asparagine 77 is the Proton acceptor of the active site. Residues tryptophan 78, arginine 80, arginine 197, and 203 to 205 (RLS) each bind substrate. Residue glutamate 216 participates in Mg(2+) binding.

Belongs to the UPP synthase family. In terms of assembly, homodimer. Mg(2+) is required as a cofactor.

The catalysed reaction is 8 isopentenyl diphosphate + (2E,6E)-farnesyl diphosphate = di-trans,octa-cis-undecaprenyl diphosphate + 8 diphosphate. Its function is as follows. Generates ditrans,octacis-undecaprenyl pyrophosphate (UPP) from isopentenyl pyrophosphate (IPP) and farnesyl diphosphate. UPP is the precursor of glycosyl carrier lipid in the biosynthesis of bacterial cell wall polysaccharide components such as peptidoglycan and lipopolysaccharide. The sequence is that of Ditrans,polycis-undecaprenyl-diphosphate synthase ((2E,6E)-farnesyl-diphosphate specific) (uppS) from Micrococcus luteus (Micrococcus lysodeikticus).